The following is a 198-amino-acid chain: dTTP/UTP pyrophosphatase (198 aa).

Asp76 (proton acceptor) is an active-site residue.

Belongs to the Maf family. YhdE subfamily. It depends on a divalent metal cation as a cofactor.

It is found in the cytoplasm. The catalysed reaction is dTTP + H2O = dTMP + diphosphate + H(+). The enzyme catalyses UTP + H2O = UMP + diphosphate + H(+). Functionally, nucleoside triphosphate pyrophosphatase that hydrolyzes dTTP and UTP. May have a dual role in cell division arrest and in preventing the incorporation of modified nucleotides into cellular nucleic acids. The polypeptide is dTTP/UTP pyrophosphatase (Shewanella denitrificans (strain OS217 / ATCC BAA-1090 / DSM 15013)).